The primary structure comprises 243 residues: Pyridoxine 5'-phosphate synthase (243 aa).

A 3-amino-2-oxopropyl phosphate-binding site is contributed by N9. Residue D11–H12 participates in 1-deoxy-D-xylulose 5-phosphate binding. R20 provides a ligand contact to 3-amino-2-oxopropyl phosphate. Residue H45 is the Proton acceptor of the active site. 1-deoxy-D-xylulose 5-phosphate-binding residues include R47 and H52. The active-site Proton acceptor is E72. T102 is a binding site for 1-deoxy-D-xylulose 5-phosphate. The active-site Proton donor is the H193. 3-amino-2-oxopropyl phosphate is bound by residues G194 and G215–H216.

The protein belongs to the PNP synthase family. Homooctamer; tetramer of dimers.

Its subcellular location is the cytoplasm. It carries out the reaction 3-amino-2-oxopropyl phosphate + 1-deoxy-D-xylulose 5-phosphate = pyridoxine 5'-phosphate + phosphate + 2 H2O + H(+). It functions in the pathway cofactor biosynthesis; pyridoxine 5'-phosphate biosynthesis; pyridoxine 5'-phosphate from D-erythrose 4-phosphate: step 5/5. Catalyzes the complicated ring closure reaction between the two acyclic compounds 1-deoxy-D-xylulose-5-phosphate (DXP) and 3-amino-2-oxopropyl phosphate (1-amino-acetone-3-phosphate or AAP) to form pyridoxine 5'-phosphate (PNP) and inorganic phosphate. The sequence is that of Pyridoxine 5'-phosphate synthase from Shigella boydii serotype 4 (strain Sb227).